A 329-amino-acid polypeptide reads, in one-letter code: Tetraacyldisaccharide 4'-kinase (329 aa).

Residue 57 to 64 participates in ATP binding; sequence TAGGSGKT.

It belongs to the LpxK family.

The enzyme catalyses a lipid A disaccharide + ATP = a lipid IVA + ADP + H(+). It participates in glycolipid biosynthesis; lipid IV(A) biosynthesis; lipid IV(A) from (3R)-3-hydroxytetradecanoyl-[acyl-carrier-protein] and UDP-N-acetyl-alpha-D-glucosamine: step 6/6. In terms of biological role, transfers the gamma-phosphate of ATP to the 4'-position of a tetraacyldisaccharide 1-phosphate intermediate (termed DS-1-P) to form tetraacyldisaccharide 1,4'-bis-phosphate (lipid IVA). The polypeptide is Tetraacyldisaccharide 4'-kinase (Thiobacillus denitrificans (strain ATCC 25259 / T1)).